The primary structure comprises 309 residues: tRNA uridine(34) hydroxylase (309 aa).

The 95-residue stretch at 126-220 folds into the Rhodanese domain; it reads SDPEVIVIDT…YLEQIPPEES (95 aa). Cysteine 180 (cysteine persulfide intermediate) is an active-site residue.

The protein belongs to the TrhO family.

The catalysed reaction is uridine(34) in tRNA + AH2 + O2 = 5-hydroxyuridine(34) in tRNA + A + H2O. In terms of biological role, catalyzes oxygen-dependent 5-hydroxyuridine (ho5U) modification at position 34 in tRNAs. This chain is tRNA uridine(34) hydroxylase, found in Nostoc sp. (strain PCC 7120 / SAG 25.82 / UTEX 2576).